Reading from the N-terminus, the 202-residue chain is Na(+)-translocating NADH-quinone reductase subunit E (202 aa).

6 helical membrane passes run 11-31, 35-55, 81-101, 114-134, 144-164, and 180-200; these read AIFV…FLAI, IEAA…TVPV, FLGL…MEMV, GVFL…LFMV, LVYG…LAGI, and LGIT…FSGI.

This sequence belongs to the NqrDE/RnfAE family. Composed of six subunits; NqrA, NqrB, NqrC, NqrD, NqrE and NqrF.

It localises to the cell inner membrane. The enzyme catalyses a ubiquinone + n Na(+)(in) + NADH + H(+) = a ubiquinol + n Na(+)(out) + NAD(+). Functionally, NQR complex catalyzes the reduction of ubiquinone-1 to ubiquinol by two successive reactions, coupled with the transport of Na(+) ions from the cytoplasm to the periplasm. NqrA to NqrE are probably involved in the second step, the conversion of ubisemiquinone to ubiquinol. This is Na(+)-translocating NADH-quinone reductase subunit E from Marinobacter nauticus (strain ATCC 700491 / DSM 11845 / VT8) (Marinobacter aquaeolei).